A 276-amino-acid chain; its full sequence is Putative non-heme chloroperoxidase (276 aa).

In terms of domain architecture, AB hydrolase-1 spans 26–263 (PIVLIHGFPL…GGPHAINWTH (238 aa)). Residues S99, D228, and H257 contribute to the active site.

This sequence belongs to the AB hydrolase superfamily. Bacterial non-heme haloperoxidase / perhydrolase family.

The chain is Putative non-heme chloroperoxidase from Synechocystis sp. (strain ATCC 27184 / PCC 6803 / Kazusa).